The following is a 318-amino-acid chain: Protoheme IX farnesyltransferase (318 aa).

9 consecutive transmembrane segments (helical) span residues 31–51, 55–75, 98–118, 125–145, 153–173, 181–201, 206–228, 238–260, and 285–305; these read IILL…QGPL, LAIA…TLNC, IQPF…FILL, LAAG…THGL, IVIG…AVTG, ILFA…ALMI, AAVK…QILA, LALA…LLGL, and FSIF…LPGA.

The protein belongs to the UbiA prenyltransferase family. Protoheme IX farnesyltransferase subfamily.

The protein localises to the cell inner membrane. The enzyme catalyses heme b + (2E,6E)-farnesyl diphosphate + H2O = Fe(II)-heme o + diphosphate. It participates in porphyrin-containing compound metabolism; heme O biosynthesis; heme O from protoheme: step 1/1. Its function is as follows. Converts heme B (protoheme IX) to heme O by substitution of the vinyl group on carbon 2 of heme B porphyrin ring with a hydroxyethyl farnesyl side group. This Synechococcus elongatus (strain ATCC 33912 / PCC 7942 / FACHB-805) (Anacystis nidulans R2) protein is Protoheme IX farnesyltransferase.